Reading from the N-terminus, the 152-residue chain is MVKAVAVLSSSEGVSGTIFFSQEGDGPTTVTGNVSGLKPGLHGFHVHALGDTTNGCMSTGPHFNPAGKEHGAPGDDNRHAGDLGNITVGEDGTASFTITDKQIPLTGANSVIGRAVVVHGDPDDLGKGGHELSKSTGNAGGRVACGIIGLQG.

His-45, His-47, and His-62 together coordinate Cu cation. An intrachain disulfide couples Cys-56 to Cys-145. Positions 62, 70, 79, and 82 each coordinate Zn(2+). His-119 contributes to the Cu cation binding site.

The protein belongs to the Cu-Zn superoxide dismutase family. As to quaternary structure, homodimer. Cu cation serves as cofactor. It depends on Zn(2+) as a cofactor.

Its subcellular location is the cytoplasm. It carries out the reaction 2 superoxide + 2 H(+) = H2O2 + O2. Functionally, destroys radicals which are normally produced within the cells and which are toxic to biological systems. This is Superoxide dismutase [Cu-Zn] (SODCC) from Ipomoea batatas (Sweet potato).